A 180-amino-acid polypeptide reads, in one-letter code: Large ribosomal subunit protein uL5 (180 aa).

Belongs to the universal ribosomal protein uL5 family. In terms of assembly, part of the 50S ribosomal subunit; part of the 5S rRNA/L5/L18/L25 subcomplex. Contacts the 5S rRNA and the P site tRNA. Forms a bridge to the 30S subunit in the 70S ribosome.

Its function is as follows. This is one of the proteins that bind and probably mediate the attachment of the 5S RNA into the large ribosomal subunit, where it forms part of the central protuberance. In the 70S ribosome it contacts protein S13 of the 30S subunit (bridge B1b), connecting the 2 subunits; this bridge is implicated in subunit movement. Contacts the P site tRNA; the 5S rRNA and some of its associated proteins might help stabilize positioning of ribosome-bound tRNAs. This is Large ribosomal subunit protein uL5 from Stenotrophomonas maltophilia (strain R551-3).